A 227-amino-acid polypeptide reads, in one-letter code: Germin-like protein 3-3 (227 aa).

A signal peptide spans 1–26; the sequence is MECFKTTLAGVVLVVLLLQQAPVLRA. Residues Cys-36 and Cys-51 are joined by a disulfide bond. Residues 65-217 form the Cupin type-1 domain; that stretch reads SRLATGGDVN…ALRVDAGVVE (153 aa). N-linked (GlcNAc...) asparagine glycosylation is found at Asn-78 and Asn-81. His-114, His-116, Glu-121, and His-163 together coordinate Mn(2+).

This sequence belongs to the germin family. In terms of assembly, oligomer (believed to be a pentamer but probably hexamer).

It localises to the secreted. It is found in the extracellular space. Its subcellular location is the apoplast. May play a role in plant defense. Probably has no oxalate oxidase activity even if the active site is conserved. The chain is Germin-like protein 3-3 from Oryza sativa subsp. japonica (Rice).